Reading from the N-terminus, the 257-residue chain is Short chain dehydrogenase ausX (257 aa).

I11, D57, R119, Y151, K155, and V184 together coordinate NADP(+). Y151 acts as the Proton acceptor in catalysis. Residue K155 is the Lowers pKa of active site Tyr of the active site.

This sequence belongs to the short-chain dehydrogenases/reductases (SDR) family.

It participates in secondary metabolite biosynthesis; terpenoid biosynthesis. Functionally, short chain dehydrogenase; part of the gene cluster that mediates the biosynthesis of calidodehydroaustin, a fungal meroterpenoid. The first step of the pathway is the synthesis of 3,5-dimethylorsellinic acid by the polyketide synthase ausA. 3,5-dimethylorsellinic acid is then prenylated by the polyprenyl transferase ausN. Further epoxidation by the FAD-dependent monooxygenase ausM and cyclization by the probable terpene cyclase ausL lead to the formation of protoaustinoid A. Protoaustinoid A is then oxidized to spiro-lactone preaustinoid A3 by the combined action of the FAD-binding monooxygenases ausB and ausC, and the dioxygenase ausE. Acid-catalyzed keto-rearrangement and ring contraction of the tetraketide portion of preaustinoid A3 by ausJ lead to the formation of preaustinoid A4. The aldo-keto reductase ausK, with the help of ausH, is involved in the next step by transforming preaustinoid A4 into isoaustinone which is in turn hydroxylated by the P450 monooxygenase ausI to form austinolide. The cytochrome P450 monooxygenase ausG modifies austinolide to austinol. Austinol is further acetylated to austin by the O-acetyltransferase ausP, which spontaneously changes to dehydroaustin. The cytochrome P450 monooxygenase ausR then converts dehydroaustin is into 7-dehydrodehydroaustin. The hydroxylation catalyzed by ausR permits the O-acetyltransferase ausQ to add an additional acetyl group to the molecule, leading to the formation of acetoxydehydroaustin. The short chain dehydrogenase ausT catalyzes the reduction of the double bond present between carbon atoms 1 and 2 to convert 7-dehydrodehydroaustin into 1,2-dihydro-7-hydroxydehydroaustin. AusQ catalyzes not only an acetylation reaction but also the addition of the PKS ausV diketide product to 1,2-dihydro-7-hydroxydehydroaustin, forming precalidodehydroaustin. Finally, the iron/alpha-ketoglutarate-dependent dioxygenase converts precalidodehydroaustin into calidodehydroaustin. This is Short chain dehydrogenase ausX from Aspergillus calidoustus.